Here is a 79-residue protein sequence, read N- to C-terminus: MWIYILVGIICLLAGLAGGFFIARRYMMSYLKNNPPINEQMLQMMMAQMGQKPSQKKINQMMSAMNKQQEKEKPKKAKK.

A helical membrane pass occupies residues 2 to 22 (WIYILVGIICLLAGLAGGFFI). The segment covering 57 to 66 (KINQMMSAMN) has biased composition (polar residues). The disordered stretch occupies residues 57 to 79 (KINQMMSAMNKQQEKEKPKKAKK).

This sequence belongs to the UPF0154 family.

The protein resides in the cell membrane. The sequence is that of UPF0154 protein lwe1321 from Listeria welshimeri serovar 6b (strain ATCC 35897 / DSM 20650 / CCUG 15529 / CIP 8149 / NCTC 11857 / SLCC 5334 / V8).